Reading from the N-terminus, the 157-residue chain is Alpha-amylase/trypsin inhibitor RA16 (157 aa).

An N-terminal signal peptide occupies residues 1–26 (MASNKVVISALLVVVVSVLAATTTMA). Intrachain disulfides connect C41/C89, C55/C77, C63/C121, C78/C137, and C91/C149.

The protein belongs to the cereal trypsin/alpha-amylase inhibitor family. Five disulfide bonds are present.

Its subcellular location is the secreted. In terms of biological role, seed storage protein. The polypeptide is Alpha-amylase/trypsin inhibitor RA16 (Oryza sativa subsp. japonica (Rice)).